Here is a 496-residue protein sequence, read N- to C-terminus: Cytochrome P450 71D180 (496 aa).

A helical; Signal-anchor for type II membrane protein transmembrane segment spans residues 1–21 (MDISISWVVIIVFVLSYLILM). C435 provides a ligand contact to heme.

Belongs to the cytochrome P450 family. Heme is required as a cofactor. As to expression, mostly expressed in flowers and, to a lower extent, in leaves, especially in glandular trichomes.

The protein resides in the membrane. It catalyses the reaction (4R)-limonene + reduced [NADPH--hemoprotein reductase] + O2 = (1R,5S)-carveol + oxidized [NADPH--hemoprotein reductase] + H2O + H(+). The catalysed reaction is (4S)-limonene + reduced [NADPH--hemoprotein reductase] + O2 = (1S,5R)-carveol + oxidized [NADPH--hemoprotein reductase] + H2O + H(+). It carries out the reaction gamma-terpinene + 2 reduced [NADPH--hemoprotein reductase] + 2 O2 = carvacrol + 2 oxidized [NADPH--hemoprotein reductase] + 3 H2O + 2 H(+). It participates in secondary metabolite biosynthesis; terpenoid biosynthesis. Functionally, involved in the biosynthesis of phenolic monoterpenes natural products thymol and carvacrol which have a broad range of biological activities acting as antimicrobial compounds, insecticides, antioxidants and pharmaceutical agents. Catalyzes the C2-hydroxylation of gamma-terpinene to produce carvacrol. Mediates also the C6-hydroxylation of (4S)-limonene and (4R)-limonene to form carveol. The protein is Cytochrome P450 71D180 of Thymus vulgaris (Thyme).